A 935-amino-acid polypeptide reads, in one-letter code: Isoleucine--tRNA ligase (935 aa).

The 'HIGH' region motif lies at 58–68 (PYANGSIHVGH). E558 provides a ligand contact to L-isoleucyl-5'-AMP. A 'KMSKS' region motif is present at residues 599–603 (KMSKS). K602 is a binding site for ATP. Zn(2+)-binding residues include C897, C900, C917, and C920.

This sequence belongs to the class-I aminoacyl-tRNA synthetase family. IleS type 1 subfamily. In terms of assembly, monomer. Requires Zn(2+) as cofactor.

It localises to the cytoplasm. The catalysed reaction is tRNA(Ile) + L-isoleucine + ATP = L-isoleucyl-tRNA(Ile) + AMP + diphosphate. In terms of biological role, catalyzes the attachment of isoleucine to tRNA(Ile). As IleRS can inadvertently accommodate and process structurally similar amino acids such as valine, to avoid such errors it has two additional distinct tRNA(Ile)-dependent editing activities. One activity is designated as 'pretransfer' editing and involves the hydrolysis of activated Val-AMP. The other activity is designated 'posttransfer' editing and involves deacylation of mischarged Val-tRNA(Ile). The sequence is that of Isoleucine--tRNA ligase from Francisella philomiragia subsp. philomiragia (strain ATCC 25017 / CCUG 19701 / FSC 153 / O#319-036).